The chain runs to 468 residues: 6-phospho-beta-galactosidase (468 aa).

Positions 19, 116, 159, 160, and 297 each coordinate D-galactose 6-phosphate. The active-site Proton donor is the Glu-160. Residue Glu-375 is the Nucleophile of the active site. D-galactose 6-phosphate is bound by residues Ser-428, Trp-429, Lys-435, and Tyr-437.

The protein belongs to the glycosyl hydrolase 1 family.

It catalyses the reaction a 6-phospho-beta-D-galactoside + H2O = D-galactose 6-phosphate + an alcohol. It participates in carbohydrate metabolism; lactose degradation; D-galactose 6-phosphate and beta-D-glucose from lactose 6-phosphate: step 1/1. The sequence is that of 6-phospho-beta-galactosidase from Streptococcus pyogenes serotype M28 (strain MGAS6180).